Reading from the N-terminus, the 573-residue chain is Proline--tRNA ligase (573 aa).

This sequence belongs to the class-II aminoacyl-tRNA synthetase family. ProS type 1 subfamily. As to quaternary structure, homodimer.

The protein localises to the cytoplasm. It catalyses the reaction tRNA(Pro) + L-proline + ATP = L-prolyl-tRNA(Pro) + AMP + diphosphate. Its function is as follows. Catalyzes the attachment of proline to tRNA(Pro) in a two-step reaction: proline is first activated by ATP to form Pro-AMP and then transferred to the acceptor end of tRNA(Pro). As ProRS can inadvertently accommodate and process non-cognate amino acids such as alanine and cysteine, to avoid such errors it has two additional distinct editing activities against alanine. One activity is designated as 'pretransfer' editing and involves the tRNA(Pro)-independent hydrolysis of activated Ala-AMP. The other activity is designated 'posttransfer' editing and involves deacylation of mischarged Ala-tRNA(Pro). The misacylated Cys-tRNA(Pro) is not edited by ProRS. The sequence is that of Proline--tRNA ligase from Geobacter sp. (strain M21).